Here is a 130-residue protein sequence, read N- to C-terminus: Small ribosomal subunit protein uS9 (130 aa).

It belongs to the universal ribosomal protein uS9 family.

This is Small ribosomal subunit protein uS9 (rpsI) from Shigella flexneri.